A 249-amino-acid polypeptide reads, in one-letter code: O-methyltransferase adaD (249 aa).

Residues 1 to 15 (MSSVTLTTTTTTTST) show a composition bias toward low complexity. The segment at 1-26 (MSSVTLTTTTTTTSTPPKPTPKDEPQ) is disordered.

It belongs to the methyltransferase superfamily.

It carries out the reaction 2-acetyl-3,4a,8,10,11,12a-hexahydroxy-1,4,4a,5,12,12a-hexahydrotetracene-1,12-dione + S-adenosyl-L-methionine = TAN-1612 + S-adenosyl-L-homocysteine + H(+). The protein operates within secondary metabolite biosynthesis. In terms of biological role, O-methyltransferase; part of the gene cluster that mediates the biosynthesis of the linear tetracyclic TAN-1612 neuropeptide Y receptor antagonist. The decaketide backbone of TAN-1612 is synthesized by the non-reducing polyketide synthase adaA via condensation of one acetyl-CoA starter unit with 9 malonyl-CoA units. The FAD-dependent monooxygenase adaC then performs hydroxylation at C2 while the polaketide chain is still attached to the NRPKS adaA. The alpha-hydroxylation step at C2 appears to be crucial for the following C18-C1 Claisen cyclization and release of the C9-hydroxyl version of TAN-1612 from the NRPKS adaA, two steps performed by the lactamase-like protein adaB. Finally, the O-methyltransferase adaD performs the C9 O-methylation to complete the biosynthesis of TAN-1612. This chain is O-methyltransferase adaD, found in Aspergillus niger (strain ATCC MYA-4892 / CBS 513.88 / FGSC A1513).